The following is a 390-amino-acid chain: 4-O-beta-D-mannosyl-D-glucose phosphorylase (390 aa).

Belongs to the glycosyl hydrolase 130 family.

The enzyme catalyses 4-O-beta-D-mannopyranosyl-D-glucopyranose + phosphate = alpha-D-mannose 1-phosphate + D-glucose. In terms of biological role, converts 4-O-beta-D-mannopyranosyl-D-glucopyranose (Man-Glc) to mannose 1-phosphate (Man1P) and glucose. Involved in a mannan catabolic pathway which feeds into glycolysis. The sequence is that of 4-O-beta-D-mannosyl-D-glucose phosphorylase from Bacteroides fragilis (strain ATCC 25285 / DSM 2151 / CCUG 4856 / JCM 11019 / LMG 10263 / NCTC 9343 / Onslow / VPI 2553 / EN-2).